The primary structure comprises 262 residues: MWKRYAAVLPANPWNWIAVWRRNYMAWKKAAIASILGNLAEPVTSLFGLGFGLGAMVGRVDGIPYVAFLAAGMVATSAMISATFETIHATFARMQAKRTWESALCTQLTLGDIVLGELAWAASKALLAGTAMMLVAATMGFASWPSVLFALPVIALTGFAFASLAMIVTALAPGYDYFIFYQTLFLTPMLFLSGAVFPVSQLPDIFQKLSHLLPLAHSIELIRPAMLDRPGGGVALHISALCIFAVMPFFLSVGLLQRRLLS.

Residues 33–259 (ASILGNLAEP…FLSVGLLQRR (227 aa)) enclose the ABC transmembrane type-2 domain. 6 helical membrane passes run 35–55 (ILGN…GLGA), 62–82 (GIPY…MISA), 125–145 (ALLA…ASWP), 147–167 (VLFA…LAMI), 177–197 (YFIF…GAVF), and 236–256 (LHIS…VGLL).

This sequence belongs to the ABC-2 integral membrane protein family. Lipooligosaccharide exporter (TC 3.A.1.102) subfamily. In terms of assembly, the complex is composed of two ATP-binding proteins (NodI) and two transmembrane proteins (NodJ).

Its subcellular location is the cell inner membrane. Functionally, part of the ABC transporter complex NodIJ involved in the export of the nodulation factors (Nod factors), the bacterial signal molecules that induce symbiosis and subsequent nodulation induction. Nod factors are LCO (lipo-chitin oligosaccharide), a modified beta-1,4-linked N-acetylglucosamine oligosaccharide. This subunit encodes the transporter. This chain is Nodulation protein J (nodJ), found in Sinorhizobium fredii (strain NBRC 101917 / NGR234).